We begin with the raw amino-acid sequence, 367 residues long: Peroxisome biogenesis protein 16 (367 aa).

A disordered region spans residues 135 to 173 (GGETPNEEKDSNQSESQNRAGNSGRNLGPHGLGNQNHHN). The span at 147–159 (QSESQNRAGNSGR) shows a compositional bias: polar residues. The next 2 membrane-spanning stretches (helical) occupy residues 237–257 (ALFAIGEVLYITRPLIYVLFI) and 264–284 (SWIPWAISLSVDTLGMGLLAN).

The protein belongs to the peroxin-16 family. Interacts with APEM9 (via both N- and C-terminus). The detection of an additional immunorelated polypeptide of 52 kDa suggests a post-translational modification of PEX16. In terms of tissue distribution, expressed in roots, siliques, seeds, cotyledons, leaves and flowers. Low expression in leaves and roots.

The protein localises to the peroxisome membrane. Its subcellular location is the endoplasmic reticulum membrane. Its function is as follows. Involved in the formation of peroxisomes, lipid bodies and protein bodies. This Arabidopsis thaliana (Mouse-ear cress) protein is Peroxisome biogenesis protein 16.